We begin with the raw amino-acid sequence, 297 residues long: Homoserine kinase (297 aa).

82–92 (PVSRGLGSSAA) contacts ATP.

The protein belongs to the GHMP kinase family. Homoserine kinase subfamily.

The protein localises to the cytoplasm. The enzyme catalyses L-homoserine + ATP = O-phospho-L-homoserine + ADP + H(+). The protein operates within amino-acid biosynthesis; L-threonine biosynthesis; L-threonine from L-aspartate: step 4/5. Catalyzes the ATP-dependent phosphorylation of L-homoserine to L-homoserine phosphate. The protein is Homoserine kinase of Clostridium botulinum (strain ATCC 19397 / Type A).